The primary structure comprises 305 residues: PI protein (305 aa).

Belongs to the initiator RepB protein family. As to quaternary structure, homodimer.

Initiation for plasmid R6K DNA replication. The chain is PI protein (pir) from Escherichia coli.